We begin with the raw amino-acid sequence, 163 residues long: Interleukin-17F (163 aa).

Positions 1–30 are cleaved as a signal peptide; sequence MTVKTLHGPAMVKYLLLSILGLAFLSEAAA. N-linked (GlcNAc...) asparagine glycosylation is present at Asn83. 2 disulfide bridges follow: Cys102–Cys152 and Cys107–Cys154.

Belongs to the IL-17 family. As to quaternary structure, homodimer; disulfide-linked. Heterodimer with IL17A (IL17A-IL17F). Forms complexes with IL17RA and IL17RC receptors with 2:1 binding stoichiometry: two receptor chains for one interleukin molecule. IL17F homodimer forms predominantly complexes with IL17RC homodimer, whereas IL17A-IL17F favors complexes with IL17RA-IL17RC. IL17RA and IL17RC chains cannot distinguish between IL17A and IL17F molecules, potentially enabling the formation of topologically distinct complexes. As to expression, expressed in T-helper 1 and T-helper 2 cells, basophils and mast cells.

Its subcellular location is the secreted. In terms of biological role, effector cytokine of innate and adaptive immune system involved in antimicrobial host defense and maintenance of tissue integrity. IL17A-IL17F signals via IL17RA-IL17RC heterodimeric receptor complex, triggering homotypic interaction of IL17RA and IL17RC chains with TRAF3IP2 adapter through SEFIR domains. This leads to downstream TRAF6-mediated activation of NF-kappa-B and MAPkinase pathways ultimately resulting in transcriptional activation of cytokines, chemokines, antimicrobial peptides and matrix metalloproteinases, with potential strong immune inflammation. IL17A-IL17F is primarily involved in host defense against extracellular bacteria and fungi by inducing neutrophilic inflammation. As signature effector cytokine of T-helper 17 cells (Th17), primarily induces neutrophil activation and recruitment at infection and inflammatory sites. Stimulates the production of antimicrobial beta-defensins DEFB1, DEFB103A, and DEFB104A by mucosal epithelial cells, limiting the entry of microbes through the epithelial barriers. IL17F homodimer can signal via IL17RC homodimeric receptor complex, triggering downstream activation of TRAF6 and NF-kappa-B signaling pathway. Via IL17RC induces transcriptional activation of IL33, a potent cytokine that stimulates group 2 innate lymphoid cells and adaptive T-helper 2 cells involved in pulmonary allergic response to fungi. Likely via IL17RC, promotes sympathetic innervation of peripheral organs by coordinating the communication between gamma-delta T cells and parenchymal cells. Stimulates sympathetic innervation of thermogenic adipose tissue by driving TGFB1 expression. Regulates the composition of intestinal microbiota and immune tolerance by inducing antimicrobial proteins that specifically control the growth of commensal Firmicutes and Bacteroidetes. This chain is Interleukin-17F (IL17F), found in Homo sapiens (Human).